Here is a 282-residue protein sequence, read N- to C-terminus: Succinate dehydrogenase [ubiquinone] iron-sulfur subunit, mitochondrial (282 aa).

A mitochondrion-targeting transit peptide spans 1–21 (MLRGSTSVCRSLELVTQAARY). Residues 39–129 (EIYRFNPEEP…TTKIYPLPHM (91 aa)) enclose the 2Fe-2S ferredoxin-type domain. [2Fe-2S] cluster is bound by residues Cys-89, Cys-94, Cys-97, and Cys-109. The 31-residue stretch at 172–202 (EQEKLDGLYECILCACCSASCPSYWWNADKY) folds into the 4Fe-4S ferredoxin-type domain. Cys-182, Cys-185, and Cys-188 together coordinate [4Fe-4S] cluster. Cys-192 contacts [3Fe-4S] cluster. A rhodoquinol is bound at residue Trp-197. Trp-197 contacts a ubiquinone. [3Fe-4S] cluster contacts are provided by Cys-239 and Cys-245. Cys-249 contacts [4Fe-4S] cluster.

This sequence belongs to the succinate dehydrogenase/fumarate reductase iron-sulfur protein family. In terms of assembly, component of the mitochondrial electron transport chain complex II composed of four subunits: a flavoprotein (Fp), an iron-sulfur protein (Ip), and a large cytochrome b (CybL) subunit and a small cytochrome b (CybS) subunit. There are 2 developmental stage-specific forms of complex II which have the Ip and CybL subunits in common. Complex II from the free-living larvae (aerobic environment) acts as a succinate dehydrogenase and is composed of the common subunit Ip and CybL and the stage specific subunits FpL and CybSL. Complex II from parasitic larvae and adults (anaerobic environment) acts as a fumarate reductase and is composed of the common subunit Ip and CybL and the stage specific subunits FpA and CybSA. The cofactor is [2Fe-2S] cluster. Requires [3Fe-4S] cluster as cofactor. [4Fe-4S] cluster is required as a cofactor. As to expression, expressed in adult muscles (at protein level).

Its subcellular location is the mitochondrion inner membrane. It catalyses the reaction a ubiquinone + succinate = a ubiquinol + fumarate. The enzyme catalyses a rhodoquinone + succinate = a rhodoquinol + fumarate. It participates in carbohydrate metabolism; tricarboxylic acid cycle; fumarate from succinate (eukaryal route): step 1/1. With respect to regulation, inhibited by the fungicide flutolanil. Iron-sulfur protein (Ip) subunit of the mitochondrial electron transport chain complex II which, together with the flavoprotein (Fp) subunit forms the catalytic core of the complex. During the free-living egg-larvae stages, which occur in an aerobic environment, complex II acts as a succinate dehydrogenase by transferring electrons from succinate to ubiquinone. During the parasitic larvae and adult stages, which occur in an anaerobic environment, complex II acts as a fumarate reductase by transferring electrons from rhodoquinol to fumarate. This chain is Succinate dehydrogenase [ubiquinone] iron-sulfur subunit, mitochondrial, found in Ascaris suum (Pig roundworm).